A 587-amino-acid chain; its full sequence is Synaptotagmin-3 (587 aa).

Topologically, residues 1–54 (MSGDYEDDLCRRALILVSDLCARVRDADTNDRCQEFNELRIRGYPRGPDADISV) are vesicular. The tract at residues 10–34 (CRRALILVSDLCARVRDADTNDRCQ) is cysteine motif. A helical transmembrane segment spans residues 55–75 (SLLSVIVTFCGIVLLGVSLFV). Residues 76–587 (SWKLCWVPWR…KGLSEKENSE (512 aa)) lie on the Cytoplasmic side of the membrane. Residues 183–205 (PSQTSPELPSEGGTGSGLLLLPP) are compositionally biased toward low complexity. The disordered stretch occupies residues 183–258 (PSQTSPELPS…EERPPALPLP (76 aa)). The segment covering 213–224 (AQSHQQVTSLAP) has biased composition (polar residues). The segment covering 229–244 (PALPRPLTQQTLTTQA) has biased composition (low complexity). Residue arginine 286 is modified to Omega-N-methylarginine. 2 consecutive C2 domains span residues 296–417 (PCGR…PLWR) and 428–562 (DLGE…EHWH). Positions 327, 333, 385, 386, 387, 390, 393, 459, 465, 519, and 521 each coordinate Ca(2+).

This sequence belongs to the synaptotagmin family. As to quaternary structure, homodimer; disulfide-linked via the cysteine motif. Can also form heterodimers with SYT6, SYT9 and SYT10. It depends on Ca(2+) as a cofactor.

The protein localises to the cell membrane. It is found in the cytoplasmic vesicle. It localises to the secretory vesicle membrane. Functionally, ca(2+) sensor involved in Ca(2+)-dependent exocytosis of secretory vesicles through Ca(2+) and phospholipid binding to the C2 domain. Ca(2+) induces binding of the C2-domains to phospholipid membranes and to assembled SNARE-complexes; both actions contribute to triggering exocytosis. Plays a role in dendrite formation by melanocytes. In Mus musculus (Mouse), this protein is Synaptotagmin-3 (Syt3).